Reading from the N-terminus, the 334-residue chain is Glyoxylate reductase (334 aa).

Residues Phe158–Ile161, Ser180–Thr182, and Ile239–Arg241 each bind NADP(+). Catalysis depends on residues Arg241 and Glu270. The active-site Proton donor is His288. His288–Gly290 provides a ligand contact to NADP(+).

The protein belongs to the D-isomer specific 2-hydroxyacid dehydrogenase family. GyaR subfamily. As to quaternary structure, homodimer.

Its subcellular location is the cytoplasm. It catalyses the reaction glycolate + NAD(+) = glyoxylate + NADH + H(+). The sequence is that of Glyoxylate reductase from Thermococcus gammatolerans (strain DSM 15229 / JCM 11827 / EJ3).